The chain runs to 122 residues: MIQMQTMLDVADNSGARKLCCIKVLGGSKRKYAGLGDIIICSVKEALPNSRVKKGDVVRAVIVRTAKEVPRPDGSAIRFDKNSAVVVNQAGEPIGTRIFGPVARELRAQRYMKIVSLAPEVL.

It belongs to the universal ribosomal protein uL14 family. As to quaternary structure, part of the 50S ribosomal subunit. Forms a cluster with proteins L3 and L19. In the 70S ribosome, L14 and L19 interact and together make contacts with the 16S rRNA in bridges B5 and B8.

Functionally, binds to 23S rRNA. Forms part of two intersubunit bridges in the 70S ribosome. This is Large ribosomal subunit protein uL14 from Syntrophotalea carbinolica (strain DSM 2380 / NBRC 103641 / GraBd1) (Pelobacter carbinolicus).